Reading from the N-terminus, the 155-residue chain is NADPH-dependent 7-cyano-7-deazaguanine reductase (155 aa).

The active-site Thioimide intermediate is the cysteine 53. Aspartate 60 functions as the Proton donor in the catalytic mechanism. Residues 75 to 77 (VES) and 94 to 95 (HE) each bind substrate.

It belongs to the GTP cyclohydrolase I family. QueF type 1 subfamily.

The protein resides in the cytoplasm. The enzyme catalyses 7-aminomethyl-7-carbaguanine + 2 NADP(+) = 7-cyano-7-deazaguanine + 2 NADPH + 3 H(+). It functions in the pathway tRNA modification; tRNA-queuosine biosynthesis. Catalyzes the NADPH-dependent reduction of 7-cyano-7-deazaguanine (preQ0) to 7-aminomethyl-7-deazaguanine (preQ1). The sequence is that of NADPH-dependent 7-cyano-7-deazaguanine reductase from Brucella anthropi (strain ATCC 49188 / DSM 6882 / CCUG 24695 / JCM 21032 / LMG 3331 / NBRC 15819 / NCTC 12168 / Alc 37) (Ochrobactrum anthropi).